A 66-amino-acid polypeptide reads, in one-letter code: Large ribosomal subunit protein bL35 (66 aa).

The span at 1–16 (MPKQKTHRASAKRFKR) shows a compositional bias: basic residues. The segment at 1-21 (MPKQKTHRASAKRFKRTGSGG) is disordered.

Belongs to the bacterial ribosomal protein bL35 family.

This Streptococcus gordonii (strain Challis / ATCC 35105 / BCRC 15272 / CH1 / DL1 / V288) protein is Large ribosomal subunit protein bL35.